The primary structure comprises 127 residues: Major sperm protein 152 (127 aa).

The residue at position 2 (T2) is an N-acetylthreonine. In terms of domain architecture, MSP spans 9–126; it reads DIQTQPGTKI…RRKNLPIEYN (118 aa).

As to expression, sperm.

The protein resides in the cell projection. It localises to the pseudopodium. The protein localises to the cytoplasm. It is found in the cytoskeleton. Central component in molecular interactions underlying sperm crawling. Forms an extensive filament system that extends from sperm villipoda, along the leading edge of the pseudopod. The polypeptide is Major sperm protein 152 (msp-152) (Caenorhabditis elegans).